The sequence spans 602 residues: Elongation factor 4 (602 aa).

The tr-type G domain maps to Arg-7–Gln-189. Residues Asp-19–Thr-24 and Asn-136–Asp-139 contribute to the GTP site.

It belongs to the TRAFAC class translation factor GTPase superfamily. Classic translation factor GTPase family. LepA subfamily.

It is found in the cell inner membrane. The catalysed reaction is GTP + H2O = GDP + phosphate + H(+). Functionally, required for accurate and efficient protein synthesis under certain stress conditions. May act as a fidelity factor of the translation reaction, by catalyzing a one-codon backward translocation of tRNAs on improperly translocated ribosomes. Back-translocation proceeds from a post-translocation (POST) complex to a pre-translocation (PRE) complex, thus giving elongation factor G a second chance to translocate the tRNAs correctly. Binds to ribosomes in a GTP-dependent manner. The chain is Elongation factor 4 from Xylella fastidiosa (strain 9a5c).